The chain runs to 333 residues: MTNRILDMEQMQDEEYVERTLRPQKLNEYIGQDKVKDQLKIFIEAAKLRDEALDHTLLFGPPGLGKTTMAFVIANELGVNIKQTSGPVIEKAGDLVALLNDLEPGDVLFIDEIHRMPMAVEEILYSAMEDFYIDIMIGAGEASRSVHLELPPFTLIGATTRAGMLSNPLRARFGITGHMEYYELADLTEIVERTADIFDMEITHEAAIELARRSRGTPRIANRLLKRVRDFAQIMGDGLIDDSITDKALTMLDVDREGLDYVDQKILRTMIEMYGGGPVGLNTLSVNIAEERETVEDMYEPYLIQQGFLMRTRTGRVATAKAYEHLGYPYTEK.

The large ATPase domain (RuvB-L) stretch occupies residues 1 to 182 (MTNRILDMEQ…FGITGHMEYY (182 aa)). Residues L21, R22, G63, K66, T67, T68, 129–131 (EDF), R172, Y182, and R219 each bind ATP. Position 67 (T67) interacts with Mg(2+). A small ATPAse domain (RuvB-S) region spans residues 183 to 253 (ELADLTEIVE…ITDKALTMLD (71 aa)). Positions 256–333 (REGLDYVDQK…EHLGYPYTEK (78 aa)) are head domain (RuvB-H). R292, R311, R313, and R316 together coordinate DNA.

This sequence belongs to the RuvB family. In terms of assembly, homohexamer. Forms an RuvA(8)-RuvB(12)-Holliday junction (HJ) complex. HJ DNA is sandwiched between 2 RuvA tetramers; dsDNA enters through RuvA and exits via RuvB. An RuvB hexamer assembles on each DNA strand where it exits the tetramer. Each RuvB hexamer is contacted by two RuvA subunits (via domain III) on 2 adjacent RuvB subunits; this complex drives branch migration. In the full resolvosome a probable DNA-RuvA(4)-RuvB(12)-RuvC(2) complex forms which resolves the HJ.

The protein localises to the cytoplasm. It catalyses the reaction ATP + H2O = ADP + phosphate + H(+). The RuvA-RuvB-RuvC complex processes Holliday junction (HJ) DNA during genetic recombination and DNA repair, while the RuvA-RuvB complex plays an important role in the rescue of blocked DNA replication forks via replication fork reversal (RFR). RuvA specifically binds to HJ cruciform DNA, conferring on it an open structure. The RuvB hexamer acts as an ATP-dependent pump, pulling dsDNA into and through the RuvAB complex. RuvB forms 2 homohexamers on either side of HJ DNA bound by 1 or 2 RuvA tetramers; 4 subunits per hexamer contact DNA at a time. Coordinated motions by a converter formed by DNA-disengaged RuvB subunits stimulates ATP hydrolysis and nucleotide exchange. Immobilization of the converter enables RuvB to convert the ATP-contained energy into a lever motion, pulling 2 nucleotides of DNA out of the RuvA tetramer per ATP hydrolyzed, thus driving DNA branch migration. The RuvB motors rotate together with the DNA substrate, which together with the progressing nucleotide cycle form the mechanistic basis for DNA recombination by continuous HJ branch migration. Branch migration allows RuvC to scan DNA until it finds its consensus sequence, where it cleaves and resolves cruciform DNA. This is Holliday junction branch migration complex subunit RuvB from Streptococcus suis (strain 98HAH33).